Here is an 877-residue protein sequence, read N- to C-terminus: Probable Ras GTPase-activating-like protein ngap (877 aa).

The region spanning 72 to 218 (TPSATYESLI…KDQKERELWF (147 aa)) is the C2 domain. The disordered stretch occupies residues 350–456 (SDDGDISGLK…ETINLSSSIN (107 aa)). The span at 389–409 (TTATTTPSSTPSTPISPSSQS) shows a compositional bias: low complexity. Positions 410–425 (NNIKTPDSKTRSSSNA) are enriched in polar residues. 2 stretches are compositionally biased toward low complexity: residues 426-438 (STNT…KSTG) and 447-456 (ETINLSSSIN). The 212-residue stretch at 591–802 (GKCLYLLKSL…ENMKSFINTL (212 aa)) folds into the Ras-GAP domain. Residues 820–848 (LEKELACLYRHLIKQRQDMAEEMESTESE) are a coiled coil.

In terms of biological role, may function as a Ras GTPase-activating protein. The protein is Probable Ras GTPase-activating-like protein ngap (ngap) of Dictyostelium discoideum (Social amoeba).